We begin with the raw amino-acid sequence, 266 residues long: Small ribosomal subunit protein uS2 (266 aa).

This sequence belongs to the universal ribosomal protein uS2 family.

In Paramagnetospirillum magneticum (strain ATCC 700264 / AMB-1) (Magnetospirillum magneticum), this protein is Small ribosomal subunit protein uS2.